The primary structure comprises 521 residues: Cytochrome P450 1A1 (521 aa).

Phenylalanine 229 lines the substrate pocket. Residue cysteine 463 coordinates heme.

Belongs to the cytochrome P450 family. Requires heme as cofactor.

Its subcellular location is the endoplasmic reticulum membrane. The protein resides in the microsome membrane. The enzyme catalyses an organic molecule + reduced [NADPH--hemoprotein reductase] + O2 = an alcohol + oxidized [NADPH--hemoprotein reductase] + H2O + H(+). Cytochromes P450 are a group of heme-thiolate monooxygenases. They oxidize a variety of structurally unrelated compounds, including steroids, fatty acids, and xenobiotics. This chain is Cytochrome P450 1A1 (cyp1a1), found in Chelon saliens (Leaping mullet).